The primary structure comprises 92 residues: Elongation factor 1-beta (92 aa).

Belongs to the EF-1-beta/EF-1-delta family.

Promotes the exchange of GDP for GTP in EF-1-alpha/GDP, thus allowing the regeneration of EF-1-alpha/GTP that could then be used to form the ternary complex EF-1-alpha/GTP/AAtRNA. This chain is Elongation factor 1-beta, found in Korarchaeum cryptofilum (strain OPF8).